A 255-amino-acid chain; its full sequence is Triosephosphate isomerase (255 aa).

Position 9 to 11 (asparagine 9 to lysine 11) interacts with substrate. Histidine 95 functions as the Electrophile in the catalytic mechanism. Glutamate 167 functions as the Proton acceptor in the catalytic mechanism. Residues glycine 173, serine 212, and glycine 233–glycine 234 contribute to the substrate site.

This sequence belongs to the triosephosphate isomerase family. As to quaternary structure, homodimer.

The protein resides in the cytoplasm. The catalysed reaction is D-glyceraldehyde 3-phosphate = dihydroxyacetone phosphate. The protein operates within carbohydrate biosynthesis; gluconeogenesis. It functions in the pathway carbohydrate degradation; glycolysis; D-glyceraldehyde 3-phosphate from glycerone phosphate: step 1/1. Involved in the gluconeogenesis. Catalyzes stereospecifically the conversion of dihydroxyacetone phosphate (DHAP) to D-glyceraldehyde-3-phosphate (G3P). The chain is Triosephosphate isomerase from Pectobacterium atrosepticum (strain SCRI 1043 / ATCC BAA-672) (Erwinia carotovora subsp. atroseptica).